The primary structure comprises 379 residues: MANLRIALVAGEASGDILGAGLMRALKAQHPAVQFIGVGGPLMQAEGLTSYFPMERLSVMGLVEVLGRLRELLARRKLLIQTLIEEKPDVFIGIDAPDFTLTLELKLRQAGIKTVHYVSPSVWAWRQKRVLKIREGCDLMLTLLPFEARFYEEKGVPVRFVGHTLADTIPLQADRTAARAELGLPDGPLVALMPGSRGGEVGRLASVFFDAAERLQALKPGVRFVLPCASPQRRVQIETLLEGRNLPLTLLDGQSHLALAACDAVLIASGTATLEALLYKRPMVVAYRLAPLTFWILKRMVKSPYISLPNLLAQRLLVPELLQDDATPEALAQTLLPLIDGGEEQTRGFDDIHRTLRRDASNQAADAVLSLIGQKQEAL.

The protein belongs to the LpxB family.

It carries out the reaction a lipid X + a UDP-2-N,3-O-bis[(3R)-3-hydroxyacyl]-alpha-D-glucosamine = a lipid A disaccharide + UDP + H(+). Its pathway is bacterial outer membrane biogenesis; LPS lipid A biosynthesis. Its function is as follows. Condensation of UDP-2,3-diacylglucosamine and 2,3-diacylglucosamine-1-phosphate to form lipid A disaccharide, a precursor of lipid A, a phosphorylated glycolipid that anchors the lipopolysaccharide to the outer membrane of the cell. The polypeptide is Lipid-A-disaccharide synthase (Pseudomonas fluorescens (strain SBW25)).